Consider the following 997-residue polypeptide: LPS-assembly protein LptD (997 aa).

A signal peptide spans 1–27 (MLYSPLYQSIRLILFGALGLSSLTVSA).

This sequence belongs to the LptD family. Component of the lipopolysaccharide transport and assembly complex. Interacts with LptE and LptA.

Its subcellular location is the cell outer membrane. Functionally, together with LptE, is involved in the assembly of lipopolysaccharide (LPS) at the surface of the outer membrane. This is LPS-assembly protein LptD from Psychrobacter cryohalolentis (strain ATCC BAA-1226 / DSM 17306 / VKM B-2378 / K5).